A 407-amino-acid chain; its full sequence is MAKKTVEALGAADLKGKRALVRVDFNVPLDESGQITDDTRIRAALPTIGMLTGGGARVILVSHLGRPKGFDDQLRLTPVAKRLGELLGQTVYKADDVIGPEVEEAVKKLEDGDVLLLENVRFYPEEEKNNPEFAQKLAGLAELYVNDAFGTAHRAHASTEGVARYLRPAVAGLLLQKELEYLGKALESPERPVLAIMGGAKVSDKIQLIQNMLTKVDSILIGGAMAYTFLKAQGVDVGASRCETSTTKKDGTTVDLLQLALDLLAEAKERGVTFLLPVDHRTNDKFGDLADPPVTPDANIPEGQMALDIGPKTEELYVAEVQKSGTVIWNGPMGVFELPGFSKGTFAVAHALAESDNLSIVGGGDSASAAEKAGVVDKLSHVSTGGGASLEFLEGKTLPGVAALDEA.

Substrate is bound by residues 24–26, arginine 40, 63–66, arginine 121, and arginine 154; these read DFN and HLGR. ATP-binding positions include lysine 205, glutamate 337, and 363-366; that span reads GGDS.

Belongs to the phosphoglycerate kinase family. In terms of assembly, monomer.

Its subcellular location is the cytoplasm. The catalysed reaction is (2R)-3-phosphoglycerate + ATP = (2R)-3-phospho-glyceroyl phosphate + ADP. It functions in the pathway carbohydrate degradation; glycolysis; pyruvate from D-glyceraldehyde 3-phosphate: step 2/5. The polypeptide is Phosphoglycerate kinase (Gloeobacter violaceus (strain ATCC 29082 / PCC 7421)).